The sequence spans 735 residues: MENNTNPISGQGKCPFSGGAAKQSAGAGTRNSNWWPNQLKLNILRQYSSLSNPMGEEFNYAAAFKSLDLITLKKDISDLMTNSQDWWPADYGHYGPFFIRMAWHSAGTYRVADGRGGAGFGMQRFAPLNSWPDNVNLDKARLLLWPIKQKYGKKISWADLMILAGNCALESMGFKTFGFAGGREDVWEPAEDIYWGSEGKWLDDQRYSGDRELENPLAAVQMGLIYVNPEGPNGNPDPLASARDIRETFARMAMNDEETVALVAGGHTFGKTHGAADPNQYVSAEPAAASIEEQGLGWKNTFGSGSGEHTISSGLEGAWTTTPAKWSHNYLENLFGFEWELTKSPAGAHQWKPKNGAGAGTVPDAHNSSKSHAPTMLTADLALRADPIYEKISRRFLENPAEFEEAFARAWFKLTHRDMGPVARYLGSDVPKEVLIWQDPIPAVNHQLIDDNDITILKAKILDAGFSVSEMVSTAWASASTFRGSDKRGGANGARICLAPQKDWKVNNPIQLSKVLDALKEIQVTFNNAQSIGKQVSIADLIVLTGCVGIEKAAKNIKVPFTPGRTDALQEQTDVASFAVLEPEADGFRNYMKTQYTVSAEEMLIDKAQLLTLTAPELTVLIGGLRVLDVNFNQSKNGLFTNRSGELTNDFFVNLLDFGTTWKASSESQDIFEGRNRKTGELKWTGTRVDLIFGSNSELRALAEVYGCTDSQEKFVKDFVKAWDKVMNLDRFDLV.

Residues M1–N31 are disordered. Residues S17–G28 show a composition bias toward low complexity. The segment at residues W103–Y226 is a cross-link (tryptophyl-tyrosyl-methioninium (Trp-Tyr) (with M-252)). Residue H104 is the Proton acceptor of the active site. A cross-link (tryptophyl-tyrosyl-methioninium (Tyr-Met) (with W-103)) is located at residues Y226–M252. H267 is a heme b binding site. The interval K352 to S371 is disordered.

It belongs to the peroxidase family. Peroxidase/catalase subfamily. In terms of assembly, homodimer or homotetramer. It depends on heme b as a cofactor. In terms of processing, formation of the three residue Trp-Tyr-Met cross-link is important for the catalase, but not the peroxidase activity of the enzyme.

It carries out the reaction H2O2 + AH2 = A + 2 H2O. The catalysed reaction is 2 H2O2 = O2 + 2 H2O. In terms of biological role, bifunctional enzyme with both catalase and broad-spectrum peroxidase activity. This chain is Catalase-peroxidase, found in Flavobacterium psychrophilum (strain ATCC 49511 / DSM 21280 / CIP 103535 / JIP02/86).